Here is a 430-residue protein sequence, read N- to C-terminus: Adenylosuccinate synthetase (430 aa).

GTP contacts are provided by residues 12-18 and 40-42; these read GDEGKGK and GHT. Catalysis depends on Asp-13, which acts as the Proton acceptor. Mg(2+) is bound by residues Asp-13 and Gly-40. IMP contacts are provided by residues 13-16, 38-41, Thr-128, Arg-142, Gln-223, Thr-238, and Arg-302; these read DEGK and NAGH. The active-site Proton donor is the His-41. Substrate is bound at residue 298–304; sequence TTTGRPR. GTP is bound by residues Arg-304, 330 to 332, and 412 to 414; these read SID and SVG.

The protein belongs to the adenylosuccinate synthetase family. In terms of assembly, homodimer. Requires Mg(2+) as cofactor.

It is found in the cytoplasm. It catalyses the reaction IMP + L-aspartate + GTP = N(6)-(1,2-dicarboxyethyl)-AMP + GDP + phosphate + 2 H(+). The protein operates within purine metabolism; AMP biosynthesis via de novo pathway; AMP from IMP: step 1/2. In terms of biological role, plays an important role in the de novo pathway of purine nucleotide biosynthesis. Catalyzes the first committed step in the biosynthesis of AMP from IMP. The chain is Adenylosuccinate synthetase from Exiguobacterium sibiricum (strain DSM 17290 / CCUG 55495 / CIP 109462 / JCM 13490 / 255-15).